The chain runs to 467 residues: Ankyrin repeat and SOCS box protein 10 (467 aa).

7 ANK repeats span residues 115 to 144 (ELTT…RPDS), 147 to 176 (GGRT…DPNI), 180 to 209 (DGKR…RVDG), 214 to 243 (EEET…CPDA), 247 to 289 (EGWT…DADA), 293 to 322 (DKQR…SANT), and 326 to 361 (GGHT…AVRV). Residues 412–464 (YSSLFALVRQPRSLQHLSRCALRSHLEGSLPQALPRLPLPPRLLRYLQLDFEG) form the SOCS box domain.

Belongs to the ankyrin SOCS box (ASB) family. Expressed in the eye. The highest expression is observed in the iris, with moderate levels in the trabecular meshwork (TM), the lamina, and the optic nerve; slightly lower levels in the ciliary body, retina, and choroid; and very low levels in the lens.

The protein resides in the cytoplasm. Its subcellular location is the nucleus. The protein operates within protein modification; protein ubiquitination. Functionally, may be a substrate-recognition component of a SCF-like ECS (Elongin-Cullin-SOCS-box protein) E3 ubiquitin-protein ligase complex which mediates the ubiquitination and subsequent proteasomal degradation of target proteins. The polypeptide is Ankyrin repeat and SOCS box protein 10 (ASB10) (Homo sapiens (Human)).